Here is a 397-residue protein sequence, read N- to C-terminus: tRNA(Met) cytidine acetate ligase (397 aa).

ATP-binding positions include 7-20 (VTEYNPFHNGHIYH), Gly-101, Asn-152, and Arg-177.

It belongs to the TmcAL family.

It localises to the cytoplasm. It catalyses the reaction cytidine(34) in elongator tRNA(Met) + acetate + ATP = N(4)-acetylcytidine(34) in elongator tRNA(Met) + AMP + diphosphate. Catalyzes the formation of N(4)-acetylcytidine (ac(4)C) at the wobble position of elongator tRNA(Met), using acetate and ATP as substrates. First activates an acetate ion to form acetyladenylate (Ac-AMP) and then transfers the acetyl group to tRNA to form ac(4)C34. In Leuconostoc citreum (strain KM20), this protein is tRNA(Met) cytidine acetate ligase.